Reading from the N-terminus, the 104-residue chain is Chemokine-like protein MC148 (104 aa).

As to quaternary structure, interacts with host CXCL12.

Functionally, plays a role in antagonizing the chemotaxis of multiple leukocyte subsets induced by CC and CXC chemokines. Displaces the interaction between CXCL12 and CXCR4 and thereby inactivates the antiviral activity of host CXCL12. This Homo sapiens (Human) protein is Chemokine-like protein MC148 (MC148).